We begin with the raw amino-acid sequence, 207 residues long: Charged multivesicular body protein 3 (207 aa).

A disordered region spans residues 174-207; it reads QVSSAPLETHQQEEVVQEKQEDSELLDRLKALKS. The stretch at 183–207 forms a coiled coil; it reads HQQEEVVQEKQEDSELLDRLKALKS. Basic and acidic residues predominate over residues 183-207; that stretch reads HQQEEVVQEKQEDSELLDRLKALKS.

The protein belongs to the SNF7 family. In terms of assembly, probable core component of the endosomal sorting required for transport complex III (ESCRT-III).

Its subcellular location is the endosome membrane. Its function is as follows. Probable core component of the endosomal sorting required for transport complex III (ESCRT-III) which is involved in multivesicular bodies (MVBs) formation and sorting of endosomal cargo proteins into MVBs. MVBs contain intraluminal vesicles (ILVs) that are generated by invagination and scission from the limiting membrane of the endosome and are delivered to lysosomes enabling degradation of membrane proteins. In Dictyostelium discoideum (Social amoeba), this protein is Charged multivesicular body protein 3 (chmp3).